A 145-amino-acid chain; its full sequence is Class I hydrophobin rodE (145 aa).

Intrachain disulfides connect Cys43–Cys126, Cys59–Cys120, Cys60–Cys95, and Cys127–Cys140.

Belongs to the fungal hydrophobin family. As to quaternary structure, self-assembles to form functional amyloid fibrils called rodlets. Self-assembly into fibrillar rodlets occurs spontaneously at hydrophobic:hydrophilic interfaces and the rodlets further associate laterally to form amphipathic monolayers.

Aerial growth, conidiation, and dispersal of filamentous fungi in the environment rely upon a capability of their secreting small amphipathic proteins called hydrophobins (HPBs) with low sequence identity. Class I can self-assemble into an outermost layer of rodlet bundles on aerial cell surfaces, conferring cellular hydrophobicity that supports fungal growth, development and dispersal; whereas Class II form highly ordered films at water-air interfaces through intermolecular interactions but contribute nothing to the rodlet structure. RodE is a class I hydrophobin that, unlike rodA, is not required for rodlet formation. The sequence is that of Class I hydrophobin rodE from Aspergillus fumigatus (strain ATCC MYA-4609 / CBS 101355 / FGSC A1100 / Af293) (Neosartorya fumigata).